A 286-amino-acid chain; its full sequence is Orotidine 5'-phosphate decarboxylase (286 aa).

Substrate is bound by residues D35, 57 to 59 (KTH), 89 to 98 (DRKFADIGNT), Y239, and R257. K91 (proton donor) is an active-site residue.

Belongs to the OMP decarboxylase family.

It catalyses the reaction orotidine 5'-phosphate + H(+) = UMP + CO2. It functions in the pathway pyrimidine metabolism; UMP biosynthesis via de novo pathway; UMP from orotate: step 2/2. This Yarrowia lipolytica (strain CLIB 122 / E 150) (Yeast) protein is Orotidine 5'-phosphate decarboxylase (URA3).